Here is a 202-residue protein sequence, read N- to C-terminus: Nucleoid occlusion factor SlmA (202 aa).

Residues 14 to 75 (KERQQQVLEV…ALIERIEQTL (62 aa)) enclose the HTH tetR-type domain. The H-T-H motif DNA-binding region spans 38–57 (TTERLAKAVGVSEGALYRYF).

It belongs to the nucleoid occlusion factor SlmA family. In terms of assembly, homodimer. Interacts with FtsZ.

The protein localises to the cytoplasm. Its subcellular location is the nucleoid. In terms of biological role, required for nucleoid occlusion (NO) phenomenon, which prevents Z-ring formation and cell division over the nucleoid. Acts as a DNA-associated cell division inhibitor that binds simultaneously chromosomal DNA and FtsZ, and disrupts the assembly of FtsZ polymers. SlmA-DNA-binding sequences (SBS) are dispersed on non-Ter regions of the chromosome, preventing FtsZ polymerization at these regions. This is Nucleoid occlusion factor SlmA from Actinobacillus pleuropneumoniae serotype 5b (strain L20).